The chain runs to 411 residues: Dihydrolipoyllysine-residue succinyltransferase component of 2-oxoglutarate dehydrogenase complex (411 aa).

The Lipoyl-binding domain maps to 2-77 (TTEIRVPTLG…EVNALLGAVE (76 aa)). The residue at position 43 (Lys-43) is an N6-lipoyllysine. Positions 82-100 (SVAKSPSSSETSVSAAPSE) are enriched in low complexity. A disordered region spans residues 82–115 (SVAKSPSSSETSVSAAPSELEQSSSSNTMPPAPS). The segment covering 101 to 110 (LEQSSSSNTM) has biased composition (polar residues). The 38-residue stretch at 111–148 (PPAPSAAKLMAENNIAKSDILGSGKRGQILKEDVLNVL) folds into the Peripheral subunit-binding (PSBD) domain. Residues His-382 and Asp-386 contribute to the active site.

This sequence belongs to the 2-oxoacid dehydrogenase family. Forms a 24-polypeptide structural core with octahedral symmetry. Part of the 2-oxoglutarate dehydrogenase (OGDH) complex composed of E1 (2-oxoglutarate dehydrogenase), E2 (dihydrolipoamide succinyltransferase) and E3 (dihydrolipoamide dehydrogenase); the complex contains multiple copies of the three enzymatic components (E1, E2 and E3). (R)-lipoate serves as cofactor.

The catalysed reaction is N(6)-[(R)-dihydrolipoyl]-L-lysyl-[protein] + succinyl-CoA = N(6)-[(R)-S(8)-succinyldihydrolipoyl]-L-lysyl-[protein] + CoA. It functions in the pathway amino-acid degradation; L-lysine degradation via saccharopine pathway; glutaryl-CoA from L-lysine: step 6/6. Functionally, E2 component of the 2-oxoglutarate dehydrogenase (OGDH) complex which catalyzes the second step in the conversion of 2-oxoglutarate to succinyl-CoA and CO(2). The polypeptide is Dihydrolipoyllysine-residue succinyltransferase component of 2-oxoglutarate dehydrogenase complex (sucB) (Bartonella vinsonii subsp. berkhoffii).